Here is a 136-residue protein sequence, read N- to C-terminus: Large ribosomal subunit protein uL22 (136 aa).

This sequence belongs to the universal ribosomal protein uL22 family. As to quaternary structure, part of the 50S ribosomal subunit.

This protein binds specifically to 23S rRNA; its binding is stimulated by other ribosomal proteins, e.g. L4, L17, and L20. It is important during the early stages of 50S assembly. It makes multiple contacts with different domains of the 23S rRNA in the assembled 50S subunit and ribosome. Its function is as follows. The globular domain of the protein is located near the polypeptide exit tunnel on the outside of the subunit, while an extended beta-hairpin is found that lines the wall of the exit tunnel in the center of the 70S ribosome. This chain is Large ribosomal subunit protein uL22, found in Leifsonia xyli subsp. xyli (strain CTCB07).